The primary structure comprises 808 residues: Putative dimethyl sulfoxide reductase chain YnfE (808 aa).

The tat-type signal signal peptide spans 1 to 43; the sequence is MSKNERMVGISRRTLVKSTAIGSLALAAGGFSLPFTLRNAAAA. The region spanning 49–110 is the 4Fe-4S Mo/W bis-MGD-type domain; it reads EKVVWGACSV…SIRRRINHPD (62 aa). [4Fe-4S] cluster contacts are provided by C56, C60, C64, and C96. S196 is a binding site for Mo-bis(molybdopterin guanine dinucleotide).

This sequence belongs to the prokaryotic molybdopterin-containing oxidoreductase family. [4Fe-4S] cluster serves as cofactor. It depends on Mo-bis(molybdopterin guanine dinucleotide) as a cofactor. In terms of processing, exported by the Tat system. The position of the signal peptide cleavage has not been experimentally proven.

It is found in the cell membrane. Terminal reductase during anaerobic growth on various sulfoxide and N-oxide compounds. The sequence is that of Putative dimethyl sulfoxide reductase chain YnfE (ynfE) from Escherichia coli (strain K12).